The chain runs to 415 residues: Glutamyl-tRNA reductase (415 aa).

Residues 49–52, serine 106, 111–113, and glutamine 117 contribute to the substrate site; these read TCNR and EPQ. Residue cysteine 50 is the Nucleophile of the active site. 186–191 lines the NADP(+) pocket; it reads GAGETI.

The protein belongs to the glutamyl-tRNA reductase family. As to quaternary structure, homodimer.

The catalysed reaction is (S)-4-amino-5-oxopentanoate + tRNA(Glu) + NADP(+) = L-glutamyl-tRNA(Glu) + NADPH + H(+). It participates in porphyrin-containing compound metabolism; protoporphyrin-IX biosynthesis; 5-aminolevulinate from L-glutamyl-tRNA(Glu): step 1/2. Its function is as follows. Catalyzes the NADPH-dependent reduction of glutamyl-tRNA(Glu) to glutamate 1-semialdehyde (GSA). This chain is Glutamyl-tRNA reductase, found in Teredinibacter turnerae (strain ATCC 39867 / T7901).